An 86-amino-acid polypeptide reads, in one-letter code: Sec-independent protein translocase protein TatA (86 aa).

A helical membrane pass occupies residues 3 to 23 (IFGVGLPEVTVILILALLIFG). Positions 56–86 (MNEEDESPKSIESNQTNEINQEKIDSENSKK) are disordered. Over residues 65-74 (SIESNQTNEI) the composition is skewed to polar residues. A compositionally biased stretch (basic and acidic residues) spans 75–86 (NQEKIDSENSKK).

Belongs to the TatA/E family. As to quaternary structure, forms a complex with TatC.

The protein localises to the cell inner membrane. Its function is as follows. Part of the twin-arginine translocation (Tat) system that transports large folded proteins containing a characteristic twin-arginine motif in their signal peptide across membranes. TatA could form the protein-conducting channel of the Tat system. The sequence is that of Sec-independent protein translocase protein TatA from Prochlorococcus marinus (strain MIT 9215).